Here is a 379-residue protein sequence, read N- to C-terminus: Homoserine O-succinyltransferase (379 aa).

An AB hydrolase-1 domain is found at 51–360; sequence NAVLICHALS…DAPQGHDAFL (310 aa). Residue serine 157 is the Nucleophile of the active site. Residue arginine 227 participates in substrate binding. Residues aspartate 323 and histidine 356 contribute to the active site. Residue aspartate 357 participates in substrate binding.

This sequence belongs to the AB hydrolase superfamily. MetX family. Homodimer.

The protein resides in the cytoplasm. It catalyses the reaction L-homoserine + succinyl-CoA = O-succinyl-L-homoserine + CoA. It participates in amino-acid biosynthesis; L-methionine biosynthesis via de novo pathway; O-succinyl-L-homoserine from L-homoserine: step 1/1. Transfers a succinyl group from succinyl-CoA to L-homoserine, forming succinyl-L-homoserine. This Pseudomonas aeruginosa (strain LESB58) protein is Homoserine O-succinyltransferase.